Here is a 557-residue protein sequence, read N- to C-terminus: MPRIHILDEETVSRIAAGEVIERPASVVKELIENSIDAGASRIIIEVENGGISLIKLVDDGCGIEREDLPLAFQRHATSKISTADDLFRLKTLGFRGEALSAIASVSKCVEVHTRTRYSPVGTYLRLENGRVAEIKDDGCPYGTSIEVRGLFETIPARLKHLSSPSQELARIAEIVTQMAIIHHRISFELSSGRRTLFRSNASETWDDALIRAFGLRTAKGMISIIAEGDGFDLHGMISSHDSSHHGSELILVYVNSRPVYSKVVVQALREAYRGFLQSGRSPLAVISIEIEPSLVDVNVHPAKREVRFLREDEVYDAVRDAALSALRSSAIPSPPPPARIAEPQLWSAKPQIQRTLPLEVQAEQRISEPLIRIVGQALDLYIIVEDDDGIMLVDQHAAAERIRYEHLLEKCKSGSISQELIQPVTVELSPGEVALLDSFSGELGEIGFEIDPFGGRAYSVRSVPAAAGLESPESIRDVLREILNLGRVCRASFRDEALKHLACRGSIKSGERLSESAMLRLLTDLFACDNPRTCPHGRPVVVRISSESLEKMFGRR.

This sequence belongs to the DNA mismatch repair MutL/HexB family.

In terms of biological role, this protein is involved in the repair of mismatches in DNA. It is required for dam-dependent methyl-directed DNA mismatch repair. May act as a 'molecular matchmaker', a protein that promotes the formation of a stable complex between two or more DNA-binding proteins in an ATP-dependent manner without itself being part of a final effector complex. The protein is DNA mismatch repair protein MutL of Methanothrix thermoacetophila (strain DSM 6194 / JCM 14653 / NBRC 101360 / PT) (Methanosaeta thermophila).